The chain runs to 269 residues: Novel plant SNARE 13 (269 aa).

The Cytoplasmic segment spans residues 1–217; sequence MASNLPMSPQ…IGRQVATDKC (217 aa). Residues 33–94 adopt a coiled-coil conformation; the sequence is DKIKDSTRQS…KQSMIKELNS (62 aa). Serine 74 bears the Phosphoserine mark. The region spanning 146–208 is the t-SNARE coiled-coil homology domain; it reads MKRMDETDQA…KKASQLVKEI (63 aa). Residues 218–238 traverse the membrane as a helical; Anchor for type IV membrane protein segment; the sequence is IMGFLFLIVCGVVAIIIVKIV. Residues 239–269 are Vesicular-facing; the sequence is NPNNKDIRDIPGLAPPAQSRKLLYLRNQDYM.

The protein belongs to the novel plant SNARE family.

Its subcellular location is the membrane. Its function is as follows. Vesicle trafficking protein that functions in the secretory pathway. This is Novel plant SNARE 13 (NPSN13) from Arabidopsis thaliana (Mouse-ear cress).